Reading from the N-terminus, the 1378-residue chain is Protein CLASP-1 (1378 aa).

Residues L168 to I206 form an HEAT 1 repeat. Disordered regions lie at residues R231–L254, I266–S325, and M590–P725. Composition is skewed to low complexity over residues S269–T283 and N610–N619. 2 stretches are compositionally biased toward polar residues: residues I620–A630 and I637–I648. Residues S664–S676 show a composition bias toward low complexity. A compositionally biased stretch (polar residues) spans G677 to K690. Low complexity predominate over residues T704–T721. A coiled-coil region spans residues A740 to D767. The segment covering I775–P784 has biased composition (basic and acidic residues). The disordered stretch occupies residues I775 to N823. Residues S786 to R812 are compositionally biased toward polar residues. The stretch at H1305–V1341 is one HEAT 2 repeat.

The protein belongs to the CLASP family.

The protein resides in the cytoplasm. The protein localises to the cytoskeleton. Microtubule plus-end tracking protein that promotes the stabilization of dynamic microtubules. Operates redundantly with cls-2 and cls-3 in regulating microtubule processes which position the spindle during asymmetric cell division. This Caenorhabditis elegans protein is Protein CLASP-1 (cls-1).